The chain runs to 190 residues: MNRVILLLSVMCVGVSSQPITENQRLFSIAVGRVQYLHLVAKKLFSDFENSLQLEDQRLLNKIASKEFCHSDNFLSPIDKHETQGSSVQKLLSVSYRLIESWEFFSRFLVASFAVRTQVTSKLSELKMGLLKLIEANQDGAGGFSESSVLQLTPYGNSELFACFKKDMHKVETYLTVAKCRLFPEANCTL.

The first 17 residues, 1 to 17 (MNRVILLLSVMCVGVSS), serve as a signal peptide directing secretion. 2 cysteine pairs are disulfide-bonded: cysteine 69/cysteine 163 and cysteine 180/cysteine 188.

The protein belongs to the somatotropin/prolactin family.

It localises to the secreted. In terms of biological role, growth hormone plays an important role in growth control and is involved in the regulation of several anabolic processes. Implicated as an osmoregulatory substance important for seawater adaptation. In Paralichthys olivaceus (Bastard halibut), this protein is Somatotropin (gh).